We begin with the raw amino-acid sequence, 424 residues long: CinA-like protein (424 aa).

It belongs to the CinA family.

The sequence is that of CinA-like protein from Shewanella frigidimarina (strain NCIMB 400).